The sequence spans 158 residues: Transcriptional regulator MraZ (158 aa).

SpoVT-AbrB domains lie at 5–50 (IYET…GGVY) and 91–134 (AVEC…SQSE).

This sequence belongs to the MraZ family. In terms of assembly, forms oligomers.

It is found in the cytoplasm. The protein resides in the nucleoid. The chain is Transcriptional regulator MraZ from Geobacter metallireducens (strain ATCC 53774 / DSM 7210 / GS-15).